We begin with the raw amino-acid sequence, 315 residues long: uncharacterized protein (315 aa).

Helical transmembrane passes span 19–39 (IGAG…GNVF), 56–76 (TVLV…LHSF), and 81–101 (PLKK…ISLI). A compositionally biased stretch (polar residues) spans 154–171 (EDSASSGRTSSSVNQPIQ). Residues 154–214 (EDSASSGRTS…EREARAQEHD (61 aa)) form a disordered region. Residues 203–214 (GGEREARAQEHD) show a composition bias toward basic and acidic residues.

Belongs to the ATPase C chain family.

It localises to the mitochondrion membrane. This is an uncharacterized protein from Arabidopsis thaliana (Mouse-ear cress).